The sequence spans 241 residues: MPPLLPLRLCRLWPRNPPSRLLGAAAGQRSRPSTYYELLGVHPGASTEEVKRAFFSKSKELHPDRDPGNPSLHSRFVELSEAYRVLSREQSRRSYDDQLRSGSPPKSPRTTVHDKSAHQTHSSWTPPNAQYWSQFHSVRPQGPQLRQQQHKQNKQVLGYCLLLMLAGMGLHYIAFRKVKQMHLNFMDEKDRIITAFYNEARARARANRGILQQERQRLGQRQPPPSEPTQGPEIVPRGAGP.

Residues 34–99 (TYYELLGVHP…QSRRSYDDQL (66 aa)) form the J domain. A compositionally biased stretch (basic and acidic residues) spans 88–99 (REQSRRSYDDQL). The segment at 88–129 (REQSRRSYDDQLRSGSPPKSPRTTVHDKSAHQTHSSWTPPNA) is disordered. The segment covering 119–129 (QTHSSWTPPNA) has biased composition (polar residues). Residues 156–175 (VLGYCLLLMLAGMGLHYIAF) form a helical membrane-spanning segment. Residues 212–241 (QQERQRLGQRQPPPSEPTQGPEIVPRGAGP) form a disordered region.

The protein resides in the membrane. The chain is DnaJ homolog subfamily C member 4 (DNAJC4) from Homo sapiens (Human).